A 187-amino-acid chain; its full sequence is Holliday junction branch migration complex subunit RuvA (187 aa).

Positions 1–64 (MIEYVRGIIE…EDGFQIFGFK (64 aa)) are domain I. Residues 65 to 136 (TKEELDLFEK…ELKDKLPKEI (72 aa)) form a domain II region. Residues 136-139 (IVFE) form a flexible linker region. The segment at 140–187 (GDNNFSNEALEALLALGYTKSEAIYALADITCDSVEDAVKQALKKLMK) is domain III.

It belongs to the RuvA family. As to quaternary structure, homotetramer. Forms an RuvA(8)-RuvB(12)-Holliday junction (HJ) complex. HJ DNA is sandwiched between 2 RuvA tetramers; dsDNA enters through RuvA and exits via RuvB. An RuvB hexamer assembles on each DNA strand where it exits the tetramer. Each RuvB hexamer is contacted by two RuvA subunits (via domain III) on 2 adjacent RuvB subunits; this complex drives branch migration. In the full resolvosome a probable DNA-RuvA(4)-RuvB(12)-RuvC(2) complex forms which resolves the HJ.

The protein localises to the cytoplasm. The RuvA-RuvB-RuvC complex processes Holliday junction (HJ) DNA during genetic recombination and DNA repair, while the RuvA-RuvB complex plays an important role in the rescue of blocked DNA replication forks via replication fork reversal (RFR). RuvA specifically binds to HJ cruciform DNA, conferring on it an open structure. The RuvB hexamer acts as an ATP-dependent pump, pulling dsDNA into and through the RuvAB complex. HJ branch migration allows RuvC to scan DNA until it finds its consensus sequence, where it cleaves and resolves the cruciform DNA. This is Holliday junction branch migration complex subunit RuvA from Thermoanaerobacter pseudethanolicus (strain ATCC 33223 / 39E) (Clostridium thermohydrosulfuricum).